A 251-amino-acid chain; its full sequence is Fibroblast growth factor 23 (251 aa).

Positions 1 to 24 (MLGACLRLLVGALCTVCSLGTARA) are cleaved as a signal peptide. Cysteines 95 and 113 form a disulfide. O-linked (GalNAc) threonine glycosylation is found at Thr-171 and Thr-178. Residues 175–251 (RRHTRSAEDP…DRCRPFPRFV (77 aa)) are disordered. A compositionally biased stretch (basic and acidic residues) spans 179-189 (RSAEDPPERDP). Residue Ser-180 is modified to Phosphoserine; by FAM20C.

This sequence belongs to the heparin-binding growth factors family. Interacts with FGFR1, FGFR2, FGFR3 and FGFR4. Affinity between fibroblast growth factors (FGFs) and their receptors is increased by KL and heparan sulfate glycosaminoglycans that function as coreceptors. Post-translationally, following secretion this protein is inactivated by cleavage into a N-terminal fragment and a C-terminal fragment. The processing is effected by proprotein convertases. O-glycosylated at Thr-171 and Thr-178 by GALNT3 and glycosylation of Thr-178 requires previous glycosylation at Thr171. Glycosylation is necessary for secretion; it blocks processing by proprotein convertases when the O-glycan is alpha 2,6-sialylated. Competition between proprotein convertase cleavage and block of cleavage by O-glycosylation determines the level of secreted active FGF23. In terms of processing, phosphorylation at Ser-180 mediated by FAM20C slows down glycosylation at Thr-178 notably. In terms of tissue distribution, expressed in the parathyroid.

Its subcellular location is the secreted. Regulator of phosphate homeostasis. Inhibits renal tubular phosphate transport by reducing SLC34A1 levels. Regulator of vitamin-D metabolism. Negatively regulates osteoblasts differentiation and matrix mineralization. Acts directly on the parathyroid to decrease PTH secretion. Up-regulates EGR1 expression in the presence of KL. The protein is Fibroblast growth factor 23 (Fgf23) of Rattus norvegicus (Rat).